A 256-amino-acid polypeptide reads, in one-letter code: tRNA pseudouridine synthase A (256 aa).

Catalysis depends on aspartate 52, which acts as the Nucleophile. Residue tyrosine 110 participates in substrate binding.

Belongs to the tRNA pseudouridine synthase TruA family. Homodimer.

It carries out the reaction uridine(38/39/40) in tRNA = pseudouridine(38/39/40) in tRNA. Its function is as follows. Formation of pseudouridine at positions 38, 39 and 40 in the anticodon stem and loop of transfer RNAs. This chain is tRNA pseudouridine synthase A, found in Stenotrophomonas maltophilia (strain R551-3).